A 245-amino-acid polypeptide reads, in one-letter code: 8-amino-3,8-dideoxy-manno-octulosonate cytidylyltransferase (245 aa).

The protein belongs to the KdsB family.

The protein localises to the cytoplasm. It carries out the reaction 8-amino-3,8-dideoxy-alpha-D-manno-octulosonate + CTP = CMP-8-amino-3,8-dideoxy-alpha-D-manno-oct-2-ulosonate + diphosphate. It functions in the pathway bacterial outer membrane biogenesis; lipopolysaccharide biosynthesis. In terms of biological role, activates KDO8N (a required 8-carbon sugar) for incorporation into bacterial lipopolysaccharide in the Shewanella genus. The chain is 8-amino-3,8-dideoxy-manno-octulosonate cytidylyltransferase from Shewanella loihica (strain ATCC BAA-1088 / PV-4).